The primary structure comprises 255 residues: Glucanase inhibitor protein 4 (255 aa).

Positions 1–21 (MKSITTASFALILFGVGAASA) are cleaved as a signal peptide. The Peptidase S1 domain maps to 29 to 255 (VLGGGAVPSG…ESLGMDQLGH (227 aa)). A disulfide bridge links cysteine 56 with cysteine 72. Asparagine 90, asparagine 105, asparagine 110, and asparagine 160 each carry an N-linked (GlcNAc...) asparagine glycan. 2 disulfides stabilise this stretch: cysteine 180–cysteine 192 and cysteine 202–cysteine 235.

Belongs to the peptidase S1 family. Forms an apoplastic complex with host endoglucanases in tomato leaves during P.infestans infection.

The protein localises to the secreted. Its function is as follows. Secreted effector that suppresses host plant glucan elicitor-mediated defense responses. Targets host endoglucanases and inhibits the endoglucanase-mediated release of elicitor-active glucan oligosaccharides from P.infestans cell walls. The protein is Glucanase inhibitor protein 4 of Phytophthora infestans (Potato late blight agent).